The primary structure comprises 385 residues: Probable threonine protease PRSS50 (385 aa).

A signal peptide spans 1–39 (MGRWCQTVARGQRPRTSAPSRAGALLLLLLLLRSAGCWG). Positions 93-358 (VSEGKVDPYR…YQHWIWDCLN (266 aa)) constitute a Peptidase S1 domain. N-linked (GlcNAc...) asparagine glycosylation occurs at asparagine 133. A disulfide bond links cysteine 138 and cysteine 154. Active-site charge relay system residues include histidine 153 and aspartate 206. Intrachain disulfides connect cysteine 240–cysteine 316, cysteine 273–cysteine 296, and cysteine 306–cysteine 334. Asparagine 279 carries N-linked (GlcNAc...) asparagine glycosylation. The active-site Charge relay system is the threonine 310.

It belongs to the peptidase S1 family. Testis specific. Differentially expressed in some breast cancer tissues.

Its subcellular location is the endoplasmic reticulum. Its function is as follows. May be involved in proteolysis through its threonine endopeptidase activity. This is Probable threonine protease PRSS50 (PRSS50) from Homo sapiens (Human).